We begin with the raw amino-acid sequence, 432 residues long: Ornithine decarboxylase 1A, chloroplastic (432 aa).

Residue K95 is modified to N6-(pyridoxal phosphate)lysine. Pyridoxal 5'-phosphate is bound by residues S227, G265, and 298–301; that span reads EPGR. 341–342 is a binding site for substrate; it reads YD. The active-site Proton donor; shared with dimeric partner is C377. Substrate is bound at residue D378. Residue Y406 participates in pyridoxal 5'-phosphate binding.

The protein belongs to the Orn/Lys/Arg decarboxylase class-II family. Homodimer. Only the dimer is catalytically active, as the active sites are constructed of residues from both monomers. Requires pyridoxal 5'-phosphate as cofactor.

Its subcellular location is the plastid. It is found in the chloroplast. The enzyme catalyses L-ornithine + H(+) = putrescine + CO2. The protein operates within alkaloid biosynthesis; nicotine biosynthesis. It participates in amine and polyamine biosynthesis; putrescine biosynthesis via L-ornithine pathway; putrescine from L-ornithine: step 1/1. In terms of biological role, involved in the biosynthesis of pyridine alkaloid natural products, leading mainly to the production of anabasine, anatabine, nicotine and nornicotine, effective deterrents against herbivores with antiparasitic and pesticide properties (neurotoxins); nornicotine serves as the precursor in the synthesis of the carcinogen compound N'-nitrosonornicotine (NNN). Catalyzes the first and rate-limiting step of polyamine biosynthesis that converts ornithine into putrescine, which is the precursor for the polyamines, spermidine and spermine. Polyamines are essential for cell proliferation and are implicated in cellular processes, ranging from DNA replication to apoptosis. In Nicotiana tabacum (Common tobacco), this protein is Ornithine decarboxylase 1A, chloroplastic.